The chain runs to 400 residues: 2'-5'-oligoadenylate synthase 1 (400 aa).

Residues 13 to 60 form an interaction with dsRNA region; it reads DKFIEDYLLPDTCFRMQINHAIDIICGFLKERCFRGSSYPVCVSKVVK. ATP is bound at residue serine 63. Mg(2+) contacts are provided by aspartate 75, aspartate 77, and aspartate 148. An interaction with dsRNA region spans residues 200–210; the sequence is QRPTKLKSLIR. Positions 210, 213, and 229 each coordinate ATP. Cysteine 397 is lipidated: S-geranylgeranyl cysteine.

The protein belongs to the 2-5A synthase family. As to quaternary structure, monomer. Homotetramer. It depends on Mg(2+) as a cofactor. Post-translationally, prenylated at C-terminal. C-terminal prenylation is necessary to initiate a block to SARS-CoV-2 and is associated with protection from severe COVID-1. The prenylated form is targeted to perinuclear structures rich in viral dsRNA, whereas the non-prenylated form is diffusely localized and unable to initiate a detectable block to SARS-CoV-2 replication. C-terminal prenylation is also necessary to initiate a block to cardiovirus EMCV. Not prenylated at C-terminal. The non-prenylated form is diffusely localized and unable to initiate a detectable block to SARS-CoV-2 replication. Expressed in lungs.

It localises to the cytoplasm. It is found in the mitochondrion. The protein localises to the nucleus. Its subcellular location is the microsome. The protein resides in the endoplasmic reticulum. It localises to the secreted. It catalyses the reaction 3 ATP = 5'-triphosphoadenylyl-(2'-&gt;5')-adenylyl-(2'-&gt;5')-adenosine + 2 diphosphate. With respect to regulation, produced as a latent enzyme which is activated by dsRNA generated during the course of viral infection. The dsRNA activator must be at least 15 nucleotides long, and no modification of the 2'-hydroxyl group is tolerated. ssRNA or dsDNA do not act as activators. In terms of biological role, interferon-induced, dsRNA-activated antiviral enzyme which plays a critical role in cellular innate antiviral response. In addition, it may also play a role in other cellular processes such as apoptosis, cell growth, differentiation and gene regulation. Synthesizes higher oligomers of 2'-5'-oligoadenylates (2-5A) from ATP which then bind to the inactive monomeric form of ribonuclease L (RNase L) leading to its dimerization and subsequent activation. Activation of RNase L leads to degradation of cellular as well as viral RNA, resulting in the inhibition of protein synthesis, thus terminating viral replication. Can mediate the antiviral effect via the classical RNase L-dependent pathway or an alternative antiviral pathway independent of RNase L. The secreted form displays antiviral effect against vesicular stomatitis virus (VSV), herpes simplex virus type 2 (HSV-2), and encephalomyocarditis virus (EMCV) and stimulates the alternative antiviral pathway independent of RNase L. Its function is as follows. When prenylated at C-terminal, acts as a double-stranded RNA (dsRNA) sensor specifically targeted to membranous replicative organelles in SARS coronavirus-2/SARS-CoV-2 infected cells where it binds to dsRNA structures in the SARS-CoV-2 5'-UTR and initiates a potent block to SARS-CoV-2 replication. Recognizes short stretches of dsRNA and activates RNase L. The binding is remarkably specific, with two conserved stem loops in the SARS-CoV-2 5'- untranslated region (UTR) constituting the principal viral target. The same mechanism is necessary to initiate a block to cardiovirus EMCV. Not prenylated at C-terminal, is diffusely localized and unable to initiate a detectable block to SARS-CoV-2 replication. This chain is 2'-5'-oligoadenylate synthase 1 (OAS1), found in Homo sapiens (Human).